Here is a 358-residue protein sequence, read N- to C-terminus: BAG family molecular chaperone regulator 1 (358 aa).

Composition is skewed to basic and acidic residues over residues 1 to 14 (MADRGGARRPRGDQ), 26 to 39 (SARETRQSESRAER), and 85 to 94 (KVAHSKELTR). The tract at residues 1-113 (MADRGGARRP…VTGTQEATQV (113 aa)) is disordered. 7 consecutive repeat copies span residues 102–111 (KKVTGTQEAT), 114–119 (EEVTTI), 120–125 (EEATQT), 126–131 (EEITVA), 132–137 (EEVTQT), 144–149 (EEMVQT), and 150–155 (EEMEPP). The segment at 114–212 (EEVTTIEEAT…LIFKGKSLKE (99 aa)) is 7 X 6 AA tandem repeat of E-E-X(4). The Ubiquitin-like domain maps to 157-237 (LSVVVTHSNE…VMLIGEKSNP (81 aa)). Residues 185-232 (DLAQLVEEATGVPLPFQKLIFKGKSLKEMETPLSALGMQNGCRVMLIG) form an interaction with HSPA8 region. Positions 229-358 (MLIGEKSNPE…LQSTNLALPE (130 aa)) are interaction with PPP1R15A. The BAG domain occupies 259–339 (HLEELNKELS…VFLAECDTVE (81 aa)).

In terms of assembly, homodimer. Forms a heteromeric complex with HSP70/HSC70. Binds to the ATPase domain of HSP/HSC70 chaperones. Interacts with NR3C1. Interacts with the N-terminal region of MAPRE2. Interacts with PPP1R15A. Interacts with BCL2 in an ATP-dependent manner. Interacts with SIAH1, SIAH2, HSPA8 (via NBD), HSPA1A (via NBD) and HSPA1B (via NBD). Interacts with ESR1; the interaction is promoted in the absence of estradiol (17-beta-estradiol/E2). Ubiquitinated; mediated by SIAH1 or SIAH2 and leading to its subsequent proteasomal degradation. Expressed in the CA1 region of the hippocampus (at protein level). Expressed in the uterus (at protein level).

The protein resides in the nucleus. It localises to the cytoplasm. In terms of biological role, co-chaperone for HSP70 and HSC70 chaperone proteins. Acts as a nucleotide-exchange factor (NEF) promoting the release of ADP from the HSP70 and HSC70 proteins thereby triggering client/substrate protein release. Nucleotide release is mediated via its binding to the nucleotide-binding domain (NBD) of HSPA8/HSC70 where as the substrate release is mediated via its binding to the substrate-binding domain (SBD) of HSPA8/HSC70. Inhibits the pro-apoptotic function of PPP1R15A, and has anti-apoptotic activity. Markedly increases the anti-cell death function of BCL2 induced by various stimuli. Involved in the STUB1-mediated proteasomal degradation of ESR1 in response to age-related circulating estradiol (17-beta-estradiol/E2) decline, thereby promotes neuronal apoptosis in response to ischemic reperfusion injury. The chain is BAG family molecular chaperone regulator 1 (Bag1) from Rattus norvegicus (Rat).